Reading from the N-terminus, the 350-residue chain is Holliday junction branch migration complex subunit RuvB (350 aa).

Positions 1–183 (MSAERLVNPH…FVAVHRLVFY (183 aa)) are large ATPase domain (RuvB-L). ATP-binding positions include L22, R23, G64, K67, T68, S69, 130-132 (EDF), R173, Y183, and R220. T68 contacts Mg(2+). The tract at residues 184 to 254 (SDDAMTEIVS…VARDALAQLE (71 aa)) is small ATPAse domain (RuvB-S). Residues 257-350 (ELGLDENDRR…ESGPQQATLF (94 aa)) are head domain (RuvB-H). DNA contacts are provided by R312 and R317. The segment at 331 to 350 (YPERTLPADDESGPQQATLF) is disordered.

Belongs to the RuvB family. As to quaternary structure, homohexamer. Forms an RuvA(8)-RuvB(12)-Holliday junction (HJ) complex. HJ DNA is sandwiched between 2 RuvA tetramers; dsDNA enters through RuvA and exits via RuvB. An RuvB hexamer assembles on each DNA strand where it exits the tetramer. Each RuvB hexamer is contacted by two RuvA subunits (via domain III) on 2 adjacent RuvB subunits; this complex drives branch migration. In the full resolvosome a probable DNA-RuvA(4)-RuvB(12)-RuvC(2) complex forms which resolves the HJ.

The protein localises to the cytoplasm. It carries out the reaction ATP + H2O = ADP + phosphate + H(+). Functionally, the RuvA-RuvB-RuvC complex processes Holliday junction (HJ) DNA during genetic recombination and DNA repair, while the RuvA-RuvB complex plays an important role in the rescue of blocked DNA replication forks via replication fork reversal (RFR). RuvA specifically binds to HJ cruciform DNA, conferring on it an open structure. The RuvB hexamer acts as an ATP-dependent pump, pulling dsDNA into and through the RuvAB complex. RuvB forms 2 homohexamers on either side of HJ DNA bound by 1 or 2 RuvA tetramers; 4 subunits per hexamer contact DNA at a time. Coordinated motions by a converter formed by DNA-disengaged RuvB subunits stimulates ATP hydrolysis and nucleotide exchange. Immobilization of the converter enables RuvB to convert the ATP-contained energy into a lever motion, pulling 2 nucleotides of DNA out of the RuvA tetramer per ATP hydrolyzed, thus driving DNA branch migration. The RuvB motors rotate together with the DNA substrate, which together with the progressing nucleotide cycle form the mechanistic basis for DNA recombination by continuous HJ branch migration. Branch migration allows RuvC to scan DNA until it finds its consensus sequence, where it cleaves and resolves cruciform DNA. This is Holliday junction branch migration complex subunit RuvB from Chloroflexus aurantiacus (strain ATCC 29366 / DSM 635 / J-10-fl).